The following is a 192-amino-acid chain: Ion-translocating oxidoreductase complex subunit A (192 aa).

Transmembrane regions (helical) follow at residues 5-25 (LLLLISTVLVNNFVLVKFLGL), 39-59 (IGMSMATTFVLTLASVLSYLV), 65-85 (LPFELGYLRTMSFILVIAVVV), 102-122 (ALGIYLPLITTNCAVLGVALL), 134-154 (AIYGFGAAVGFSLVLILFSAM), and 171-191 (AIAMITAGLMSLAFMGFTGLV).

The protein belongs to the NqrDE/RnfAE family. In terms of assembly, the complex is composed of six subunits: RnfA, RnfB, RnfC, RnfD, RnfE and RnfG.

It localises to the cell inner membrane. Functionally, part of a membrane-bound complex that couples electron transfer with translocation of ions across the membrane. This Shewanella sediminis (strain HAW-EB3) protein is Ion-translocating oxidoreductase complex subunit A.